Consider the following 366-residue polypeptide: Ribosomal RNA large subunit methyltransferase M (366 aa).

S-adenosyl-L-methionine contacts are provided by residues Ser188, 221 to 224 (CPGG), Asp240, Asp260, and Asp277. Lys306 serves as the catalytic Proton acceptor.

It belongs to the class I-like SAM-binding methyltransferase superfamily. RNA methyltransferase RlmE family. RlmM subfamily. Monomer.

The protein localises to the cytoplasm. The enzyme catalyses cytidine(2498) in 23S rRNA + S-adenosyl-L-methionine = 2'-O-methylcytidine(2498) in 23S rRNA + S-adenosyl-L-homocysteine + H(+). Catalyzes the 2'-O-methylation at nucleotide C2498 in 23S rRNA. This Salmonella newport (strain SL254) protein is Ribosomal RNA large subunit methyltransferase M.